The chain runs to 553 residues: Zinc finger protein Elbow (553 aa).

Disordered stretches follow at residues 59 to 243 and 388 to 407; these read STKQ…MHSP and GGGG…SGGS. Composition is skewed to low complexity over residues 96–110 and 121–134; these read SPVS…TGSV and SSSS…TFKP. Composition is skewed to polar residues over residues 137 to 146, 153 to 173, and 224 to 236; these read PNNNISNITT, TNLS…KSMT, and TAST…NSKE. Positions 287-480 are self-association; sequence SASAAAAAAS…PDAVLSAAAA (194 aa). Residues 287 to 553 are interaction with noc; sequence SASAAAAAAS…YGPRMGSSHP (267 aa). Gly residues predominate over residues 388-406; it reads GGGGGGSSKSSGSQGGSGG. The C2H2-type zinc-finger motif lies at 437–466; that stretch reads YVCSWIGSDAAYCGKRFGTSDDLFQHLRTH.

This sequence belongs to the Elbow/Noc family. In terms of assembly, self-associates. Interacts with gro and noc.

May negatively regulate Notch-induced cell proliferation in the eye-head primordium. May act in leg and wing primordia to negatively regulate body-wall specifying genes and thereby promote appendage formation. Required for tracheal development. This chain is Zinc finger protein Elbow (elB), found in Drosophila melanogaster (Fruit fly).